The chain runs to 460 residues: CWF19-like protein 2 homolog (460 aa).

3 disordered regions span residues 38–78, 103–175, and 193–227; these read GKTF…EDEK, KLES…TGTA, and RRHD…ESIK. The span at 54–68 shows a compositional bias: polar residues; it reads GSQQVRNDVMKSSDS. Residues 84 to 106 adopt a coiled-coil conformation; that stretch reads KILKAEMKGDTDLVKKLKRKLES. Basic and acidic residues-rich tracts occupy residues 113–131, 139–172, and 205–227; these read EPPK…DREG, RRSD…EEKT, and EMQK…ESIK. Residues 210-231 adopt a coiled-coil conformation; sequence KKKSDEKDKKRKEKESIKEHKR.

Belongs to the CWF19 family.

The polypeptide is CWF19-like protein 2 homolog (Caenorhabditis elegans).